The chain runs to 544 residues: Shootin-1 (544 aa).

Coiled-coil stretches lie at residues 17-100 (SNQV…LKRK), 141-184 (IVIT…EKHD), and 259-349 (EALQ…QVSN). Residues 343 to 544 (KLQQVSNPPT…TTTICTEQLS (202 aa)) are disordered. Residues 352–371 (TAAPAPPPPPPPPPPPPPPS) show a composition bias toward pro residues. The span at 372–383 (SSSSNPLSSLLS) shows a compositional bias: low complexity. A compositionally biased stretch (basic and acidic residues) spans 397 to 412 (LVEKDSSEKSPEKDVR). Positions 469–479 (SSSPGPRPPSP) are enriched in pro residues. Positions 480 to 504 (SEKSELEKALQRRREAVKSAKNNTN) form a coiled coil. The span at 481–497 (EKSELEKALQRRREAVK) shows a compositional bias: basic and acidic residues. The span at 499-544 (AKNNTNPSSVVDLTQIKQTRSEPGQNTGDQETLRHTTTTICTEQLS) shows a compositional bias: polar residues.

The protein belongs to the shootin family.

Its subcellular location is the perikaryon. The protein resides in the cell projection. The protein localises to the axon. It localises to the growth cone. It is found in the cytoplasm. Its subcellular location is the cytoskeleton. The protein resides in the filopodium. The protein localises to the lamellipodium. In terms of biological role, involved in the generation of internal asymmetric signals required for neuronal polarization and neurite outgrowth. The protein is Shootin-1 of Danio rerio (Zebrafish).